The primary structure comprises 374 residues: Speckle-type POZ protein B (374 aa).

One can recognise an MATH domain in the interval 31–161 (KFSYMWTINN…DDKLTLFCEV (131 aa)). A required for nuclear localization region spans residues 71–191 (VNPKGLDEES…PECRLSDELG (121 aa)). A BTB domain is found at 173–297 (QNTMNMVKVP…MCEEALCSNL (125 aa)). The interval 297-355 (LSVENAAEILILADLHSADQLKTQAVDFINYHASDVMETSGWKSMVVSHPHLVAEAYRS) is homodimerization.

The protein belongs to the Tdpoz family. As to quaternary structure, homodimer. Part of cullin-RING-based BCR (BTB-CUL3-RBX1) E3 ubiquitin-protein ligase complexes that contain CUL3 and SPOP, plus a target protein.

Its subcellular location is the nucleus. The protein resides in the nucleus speckle. The protein operates within protein modification; protein ubiquitination. Component of a cullin-RING-based BCR (BTB-CUL3-RBX1) E3 ubiquitin-protein ligase complex that mediates the ubiquitination of target proteins, leading most often to their proteasomal degradation. The chain is Speckle-type POZ protein B (spop-b) from Xenopus laevis (African clawed frog).